A 274-amino-acid chain; its full sequence is Phosphate import ATP-binding protein PstB (274 aa).

The span at 1 to 11 shows a compositional bias: polar residues; sequence MSEISIATSVP. Positions 1-21 are disordered; sequence MSEISIATSVPSGPGPLIGNQ. The 242-residue stretch at 28 to 269 folds into the ABC transporter domain; it reads VIVRDLNFYY…PNDRRTQDYI (242 aa). 60-67 contributes to the ATP binding site; that stretch reads GPSGCGKS.

This sequence belongs to the ABC transporter superfamily. Phosphate importer (TC 3.A.1.7) family. In terms of assembly, the complex is composed of two ATP-binding proteins (PstB), two transmembrane proteins (PstC and PstA) and a solute-binding protein (PstS).

Its subcellular location is the cell inner membrane. It catalyses the reaction phosphate(out) + ATP + H2O = ADP + 2 phosphate(in) + H(+). In terms of biological role, part of the ABC transporter complex PstSACB involved in phosphate import. Responsible for energy coupling to the transport system. In Rhodopseudomonas palustris (strain BisB5), this protein is Phosphate import ATP-binding protein PstB.